A 196-amino-acid chain; its full sequence is APGW-amide-related neuropeptide (196 aa).

The N-terminal stretch at 1 to 22 (METLNIFLVIFSLLGTIIIASS) is a signal peptide. Residues 23–48 (SDESSERKKRDLDTIDDTNNDFLTAD) constitute a propeptide that is removed on maturation. Trp-54 is modified (tryptophan amide). The propeptide occupies 58-68 (SFDDDILNNLD). Trp-74 is modified (tryptophan amide). Residues 78–88 (SDMLFDSEEIE) constitute a propeptide that is removed on maturation. Residue Trp-94 is modified to Tryptophan amide. Positions 98 to 105 (SSSLYDDE) are excised as a propeptide. Trp-111 carries the post-translational modification Tryptophan amide. Positions 115-129 (SSALLDDLSLYNSIV) are excised as a propeptide. Trp-135 bears the Tryptophan amide mark. Residues 139–146 (SDTFKVDI) constitute a propeptide that is removed on maturation. Tryptophan amide occurs at positions 151 and 158. Positions 162 to 196 (SGPNMCMDFQDEILQLYKLLNEAEKLHSECEALNI) are excised as a propeptide.

In terms of tissue distribution, expressed in cerebral, pedal and visceral ganglia. TPGW-amide is found in pedal and cerebral ganglia and in shell adductor muscle (at protein level). RPGW-amide and KPGW-amide are found in pedal retractor muscle, ABRM and shell adductor muscle (at protein level).

Its function is as follows. RPGW-amide, KPGW-amide and TPGW-amide tetrapeptides are involved in control of muscle contraction and may function as neurotransmitters. These peptides increase tension of the pedal retractor muscle and, in conjunction with FMRF-amide, increase peak tension of the anterior byssus retractor muscle (ABRM). The sequence is that of APGW-amide-related neuropeptide from Mytilus edulis (Blue mussel).